The following is a 509-amino-acid chain: Maturase K (509 aa).

It belongs to the intron maturase 2 family. MatK subfamily.

Its subcellular location is the plastid. The protein localises to the chloroplast. Functionally, usually encoded in the trnK tRNA gene intron. Probably assists in splicing its own and other chloroplast group II introns. This chain is Maturase K, found in Nicotiana glutinosa (Tobacco).